Consider the following 138-residue polypeptide: Putative pre-16S rRNA nuclease (138 aa).

This sequence belongs to the YqgF nuclease family.

The protein localises to the cytoplasm. Could be a nuclease involved in processing of the 5'-end of pre-16S rRNA. This chain is Putative pre-16S rRNA nuclease, found in Flavobacterium johnsoniae (strain ATCC 17061 / DSM 2064 / JCM 8514 / BCRC 14874 / CCUG 350202 / NBRC 14942 / NCIMB 11054 / UW101) (Cytophaga johnsonae).